A 453-amino-acid polypeptide reads, in one-letter code: tRNA modification GTPase MnmE (453 aa).

(6S)-5-formyl-5,6,7,8-tetrahydrofolate-binding residues include R22, E79, and K119. The TrmE-type G domain maps to 215–376; that stretch reads GMKVVIAGRP…LKQHLKSLMG (162 aa). N225 contacts K(+). GTP is bound by residues 225–230, 244–250, 269–272, and 334–337; these read NAGKSS, TEIAGTT, DTAG, and NKAD. A Mg(2+)-binding site is contributed by S229. The K(+) site is built by T244, I246, and T249. T250 lines the Mg(2+) pocket. K453 contributes to the (6S)-5-formyl-5,6,7,8-tetrahydrofolate binding site.

The protein belongs to the TRAFAC class TrmE-Era-EngA-EngB-Septin-like GTPase superfamily. TrmE GTPase family. As to quaternary structure, homodimer. Heterotetramer of two MnmE and two MnmG subunits. It depends on K(+) as a cofactor.

It localises to the cytoplasm. Functionally, exhibits a very high intrinsic GTPase hydrolysis rate. Involved in the addition of a carboxymethylaminomethyl (cmnm) group at the wobble position (U34) of certain tRNAs, forming tRNA-cmnm(5)s(2)U34. The sequence is that of tRNA modification GTPase MnmE from Shewanella frigidimarina (strain NCIMB 400).